A 132-amino-acid chain; its full sequence is Small ribosomal subunit protein uS15 (132 aa).

Belongs to the universal ribosomal protein uS15 family. Part of the 30S ribosomal subunit.

This Methanobrevibacter smithii (strain ATCC 35061 / DSM 861 / OCM 144 / PS) protein is Small ribosomal subunit protein uS15.